Consider the following 259-residue polypeptide: Haloacid dehalogenase-like hydrolase domain-containing protein 2 (259 aa).

Residues Asp-13 and Ser-15 each coordinate Mg(2+). Substrate is bound by residues 13–15 (DLS) and 46–47 (TN). Residues 49-71 (TKESKRDLLERLRKLEFDISEEE) are a coiled coil. At Lys-50 the chain carries N6-succinyllysine. Lys-179 provides a ligand contact to substrate. Asp-204 contributes to the Mg(2+) binding site.

This sequence belongs to the HAD-like hydrolase superfamily. Requires Mg(2+) as cofactor.

This Rattus norvegicus (Rat) protein is Haloacid dehalogenase-like hydrolase domain-containing protein 2 (Hdhd2).